The following is a 315-amino-acid chain: NAD kinase (315 aa).

Asp-91 serves as the catalytic Proton acceptor. Residues Asp-91–Gly-92, Arg-96, Asn-165–Glu-166, Asp-195, and Thr-206–Ser-211 each bind NAD(+).

It belongs to the NAD kinase family. The cofactor is a divalent metal cation.

The protein resides in the cytoplasm. The catalysed reaction is NAD(+) + ATP = ADP + NADP(+) + H(+). Its function is as follows. Involved in the regulation of the intracellular balance of NAD and NADP, and is a key enzyme in the biosynthesis of NADP. Catalyzes specifically the phosphorylation on 2'-hydroxyl of the adenosine moiety of NAD to yield NADP. This Rhodococcus erythropolis (strain PR4 / NBRC 100887) protein is NAD kinase.